A 331-amino-acid polypeptide reads, in one-letter code: Tetraacyldisaccharide 4'-kinase (331 aa).

An ATP-binding site is contributed by 55 to 62; that stretch reads TAGGNGKT.

It belongs to the LpxK family.

The catalysed reaction is a lipid A disaccharide + ATP = a lipid IVA + ADP + H(+). The protein operates within glycolipid biosynthesis; lipid IV(A) biosynthesis; lipid IV(A) from (3R)-3-hydroxytetradecanoyl-[acyl-carrier-protein] and UDP-N-acetyl-alpha-D-glucosamine: step 6/6. Transfers the gamma-phosphate of ATP to the 4'-position of a tetraacyldisaccharide 1-phosphate intermediate (termed DS-1-P) to form tetraacyldisaccharide 1,4'-bis-phosphate (lipid IVA). This Edwardsiella ictaluri (strain 93-146) protein is Tetraacyldisaccharide 4'-kinase.